Here is a 294-residue protein sequence, read N- to C-terminus: Cytidine deaminase (294 aa).

2 CMP/dCMP-type deaminase domains span residues 48–168 (DEDA…FGPK) and 186–294 (LTGD…VLLA). A substrate-binding site is contributed by 89–91 (NME). Zn(2+) is bound at residue histidine 102. The Proton donor role is filled by glutamate 104. The Zn(2+) site is built by cysteine 129 and cysteine 132.

This sequence belongs to the cytidine and deoxycytidylate deaminase family. In terms of assembly, homodimer. Requires Zn(2+) as cofactor.

It catalyses the reaction cytidine + H2O + H(+) = uridine + NH4(+). The catalysed reaction is 2'-deoxycytidine + H2O + H(+) = 2'-deoxyuridine + NH4(+). Functionally, this enzyme scavenges exogenous and endogenous cytidine and 2'-deoxycytidine for UMP synthesis. This Escherichia coli O7:K1 (strain IAI39 / ExPEC) protein is Cytidine deaminase.